The chain runs to 207 residues: uncharacterized protein (207 aa).

Active-site charge relay system residues include S119 and H160.

This sequence belongs to the peptidase S51 family.

This is an uncharacterized protein from Pasteurella multocida (strain Pm70).